The following is a 729-amino-acid chain: Fatty acid oxidation complex subunit alpha (729 aa).

The segment at 1 to 189 is enoyl-CoA hydratase/isomerase; that stretch reads MLYKGDTLYL…KIGLVDGVVK (189 aa). A substrate-binding site is contributed by Asp-296. The tract at residues 311–729 is 3-hydroxyacyl-CoA dehydrogenase; sequence ETPKQAAVLG…ARPVGSLKTA (419 aa). NAD(+) is bound by residues Met-324, Asp-343, 400–402, Lys-407, and Ser-429; that span reads VVE. The active-site For 3-hydroxyacyl-CoA dehydrogenase activity is the His-450. Asn-453 serves as a coordination point for NAD(+). Substrate-binding residues include Asn-500 and Tyr-660. The interval 708-729 is disordered; it reads RHNEPYYPPVEPARPVGSLKTA.

This sequence in the N-terminal section; belongs to the enoyl-CoA hydratase/isomerase family. It in the C-terminal section; belongs to the 3-hydroxyacyl-CoA dehydrogenase family. Heterotetramer of two alpha chains (FadB) and two beta chains (FadA).

The catalysed reaction is a (3S)-3-hydroxyacyl-CoA + NAD(+) = a 3-oxoacyl-CoA + NADH + H(+). The enzyme catalyses a (3S)-3-hydroxyacyl-CoA = a (2E)-enoyl-CoA + H2O. It carries out the reaction a 4-saturated-(3S)-3-hydroxyacyl-CoA = a (3E)-enoyl-CoA + H2O. It catalyses the reaction (3S)-3-hydroxybutanoyl-CoA = (3R)-3-hydroxybutanoyl-CoA. The catalysed reaction is a (3Z)-enoyl-CoA = a 4-saturated (2E)-enoyl-CoA. The enzyme catalyses a (3E)-enoyl-CoA = a 4-saturated (2E)-enoyl-CoA. Its pathway is lipid metabolism; fatty acid beta-oxidation. Involved in the aerobic and anaerobic degradation of long-chain fatty acids via beta-oxidation cycle. Catalyzes the formation of 3-oxoacyl-CoA from enoyl-CoA via L-3-hydroxyacyl-CoA. It can also use D-3-hydroxyacyl-CoA and cis-3-enoyl-CoA as substrate. The polypeptide is Fatty acid oxidation complex subunit alpha (Salmonella agona (strain SL483)).